Consider the following 94-residue polypeptide: Co-chaperonin GroES (94 aa).

Belongs to the GroES chaperonin family. As to quaternary structure, heptamer of 7 subunits arranged in a ring. Interacts with the chaperonin GroEL.

It is found in the cytoplasm. Together with the chaperonin GroEL, plays an essential role in assisting protein folding. The GroEL-GroES system forms a nano-cage that allows encapsulation of the non-native substrate proteins and provides a physical environment optimized to promote and accelerate protein folding. GroES binds to the apical surface of the GroEL ring, thereby capping the opening of the GroEL channel. The chain is Co-chaperonin GroES from Lactococcus lactis subsp. lactis (strain IL1403) (Streptococcus lactis).